The chain runs to 202 residues: Dephospho-CoA kinase (202 aa).

In terms of domain architecture, DPCK spans isoleucine 3–cysteine 202. Glycine 11–leucine 16 serves as a coordination point for ATP.

Belongs to the CoaE family.

It localises to the cytoplasm. The enzyme catalyses 3'-dephospho-CoA + ATP = ADP + CoA + H(+). It functions in the pathway cofactor biosynthesis; coenzyme A biosynthesis; CoA from (R)-pantothenate: step 5/5. Catalyzes the phosphorylation of the 3'-hydroxyl group of dephosphocoenzyme A to form coenzyme A. The protein is Dephospho-CoA kinase of Ehrlichia chaffeensis (strain ATCC CRL-10679 / Arkansas).